We begin with the raw amino-acid sequence, 401 residues long: Argininosuccinate synthase (401 aa).

9 to 17 (AYSGGLDTS) is an ATP binding site. Residue Tyr-88 coordinates L-citrulline. Gly-118 contributes to the ATP binding site. L-aspartate contacts are provided by Thr-120, Asn-124, and Asp-125. L-citrulline is bound at residue Asn-124. L-citrulline-binding residues include Arg-128, Ser-177, Ser-186, Glu-262, and Tyr-274.

Belongs to the argininosuccinate synthase family. Type 1 subfamily. In terms of assembly, homotetramer.

The protein resides in the cytoplasm. The catalysed reaction is L-citrulline + L-aspartate + ATP = 2-(N(omega)-L-arginino)succinate + AMP + diphosphate + H(+). It participates in amino-acid biosynthesis; L-arginine biosynthesis; L-arginine from L-ornithine and carbamoyl phosphate: step 2/3. In Chlorobaculum tepidum (strain ATCC 49652 / DSM 12025 / NBRC 103806 / TLS) (Chlorobium tepidum), this protein is Argininosuccinate synthase.